The primary structure comprises 524 residues: GMP synthase [glutamine-hydrolyzing] (524 aa).

Residues 5-195 (KVIVIDFGGQ…VRGVCGCAGT (191 aa)) form the Glutamine amidotransferase type-1 domain. Catalysis depends on Cys-82, which acts as the Nucleophile. Catalysis depends on residues His-169 and Glu-171. The region spanning 196–389 (WKMDSFVKNT…LGLPDYLVFR (194 aa)) is the GMPS ATP-PPase domain. An ATP-binding site is contributed by 223–229 (SGGVDSS).

As to quaternary structure, homodimer.

It catalyses the reaction XMP + L-glutamine + ATP + H2O = GMP + L-glutamate + AMP + diphosphate + 2 H(+). Its pathway is purine metabolism; GMP biosynthesis; GMP from XMP (L-Gln route): step 1/1. Its function is as follows. Catalyzes the synthesis of GMP from XMP. In Agathobacter rectalis (strain ATCC 33656 / DSM 3377 / JCM 17463 / KCTC 5835 / VPI 0990) (Eubacterium rectale), this protein is GMP synthase [glutamine-hydrolyzing].